A 400-amino-acid chain; its full sequence is Elongation factor Tu (400 aa).

Positions 10–208 constitute a tr-type G domain; that stretch reads KPHVNVGTIG…AMDNYIPEPQ (199 aa). The interval 19–26 is G1; the sequence is GHIDHGKS. 19 to 26 is a GTP binding site; it reads GHIDHGKS. Serine 26 is a binding site for Mg(2+). Positions 60–64 are G2; that stretch reads GITIN. The G3 stretch occupies residues 81–84; that stretch reads DCPG. GTP contacts are provided by residues 81 to 85 and 136 to 139; these read DCPGH and NKTD. A G4 region spans residues 136–139; the sequence is NKTD. The segment at 174 to 176 is G5; the sequence is SAL.

It belongs to the TRAFAC class translation factor GTPase superfamily. Classic translation factor GTPase family. EF-Tu/EF-1A subfamily. As to quaternary structure, monomer.

The protein resides in the cytoplasm. The enzyme catalyses GTP + H2O = GDP + phosphate + H(+). Its function is as follows. GTP hydrolase that promotes the GTP-dependent binding of aminoacyl-tRNA to the A-site of ribosomes during protein biosynthesis. This chain is Elongation factor Tu, found in Thermotoga petrophila (strain ATCC BAA-488 / DSM 13995 / JCM 10881 / RKU-1).